We begin with the raw amino-acid sequence, 275 residues long: Large ribosomal subunit protein uL2c (275 aa).

Residues 224 to 263 form a disordered region; sequence VMNPVDHPHGGGEGRAPIGRKRPLTPWGRPALGKKSRKNH.

This sequence belongs to the universal ribosomal protein uL2 family. Part of the 50S ribosomal subunit.

The protein localises to the plastid. It localises to the chloroplast. In Chaetosphaeridium globosum (Charophycean green alga), this protein is Large ribosomal subunit protein uL2c (rpl2).